The following is a 245-amino-acid chain: Polyhedrin (245 aa).

The protein belongs to the polyhedrin family.

Its function is as follows. Major component of the virus occlusion bodies, which are large proteinaceous structures (polyhedra), that protect the virus from the outside environment for extended periods until they are ingested by insect larvae. In Orgyia pseudotsugata multicapsid polyhedrosis virus (OpMNPV), this protein is Polyhedrin (PH).